The primary structure comprises 198 residues: Protein GrpE (198 aa).

The protein belongs to the GrpE family. As to quaternary structure, homodimer.

Its subcellular location is the cytoplasm. Functionally, participates actively in the response to hyperosmotic and heat shock by preventing the aggregation of stress-denatured proteins, in association with DnaK and GrpE. It is the nucleotide exchange factor for DnaK and may function as a thermosensor. Unfolded proteins bind initially to DnaJ; upon interaction with the DnaJ-bound protein, DnaK hydrolyzes its bound ATP, resulting in the formation of a stable complex. GrpE releases ADP from DnaK; ATP binding to DnaK triggers the release of the substrate protein, thus completing the reaction cycle. Several rounds of ATP-dependent interactions between DnaJ, DnaK and GrpE are required for fully efficient folding. This is Protein GrpE from Actinobacillus pleuropneumoniae serotype 5b (strain L20).